Consider the following 84-residue polypeptide: DNA-directed RNA polymerase subunit Rpo5 (84 aa).

This sequence belongs to the archaeal Rpo5/eukaryotic RPB5 RNA polymerase subunit family. Part of the RNA polymerase complex.

The protein resides in the cytoplasm. The enzyme catalyses RNA(n) + a ribonucleoside 5'-triphosphate = RNA(n+1) + diphosphate. Its function is as follows. DNA-dependent RNA polymerase (RNAP) catalyzes the transcription of DNA into RNA using the four ribonucleoside triphosphates as substrates. In Saccharolobus islandicus (strain Y.N.15.51 / Yellowstone #2) (Sulfolobus islandicus), this protein is DNA-directed RNA polymerase subunit Rpo5.